The sequence spans 156 residues: MPRRRSIEPRKILPDPKFGSELLAKFINVLMVDGKKSIAEKIVYSALDTLAQRTGKEALEAFEAALDNVRPTVEVKSRRVGGSTYQVPVEVRPVRRNALGMRWIVDAARKRGDKSMALRLANELSDASENKGAAVKKREDVHRMAEANKAFAHYRW.

The protein belongs to the universal ribosomal protein uS7 family. As to quaternary structure, part of the 30S ribosomal subunit. Contacts proteins S9 and S11.

Functionally, one of the primary rRNA binding proteins, it binds directly to 16S rRNA where it nucleates assembly of the head domain of the 30S subunit. Is located at the subunit interface close to the decoding center, probably blocks exit of the E-site tRNA. The chain is Small ribosomal subunit protein uS7 from Pasteurella multocida (strain Pm70).